The following is a 194-amino-acid chain: NADH-quinone oxidoreductase subunit B 1 (194 aa).

[4Fe-4S] cluster-binding residues include Cys73, Cys74, Cys138, and Cys168.

Belongs to the complex I 20 kDa subunit family. As to quaternary structure, NDH-1 is composed of 14 different subunits. Subunits NuoB, C, D, E, F, and G constitute the peripheral sector of the complex. The cofactor is [4Fe-4S] cluster.

It localises to the cell inner membrane. It catalyses the reaction a quinone + NADH + 5 H(+)(in) = a quinol + NAD(+) + 4 H(+)(out). Functionally, NDH-1 shuttles electrons from NADH, via FMN and iron-sulfur (Fe-S) centers, to quinones in the respiratory chain. The immediate electron acceptor for the enzyme in this species is believed to be ubiquinone. Couples the redox reaction to proton translocation (for every two electrons transferred, four hydrogen ions are translocated across the cytoplasmic membrane), and thus conserves the redox energy in a proton gradient. In Rhizobium etli (strain CIAT 652), this protein is NADH-quinone oxidoreductase subunit B 1.